We begin with the raw amino-acid sequence, 89 residues long: MANSPQAKKRARQNEKNRKHNASLRSMARTYMKKVDAKIKAGNHDEAQAALKEAQPIMDSMVNKGIFAKNKIARHKSRLNAKIKALKSA.

The tract at residues 1–26 (MANSPQAKKRARQNEKNRKHNASLRS) is disordered. Basic residues predominate over residues 7 to 22 (AKKRARQNEKNRKHNA).

The protein belongs to the bacterial ribosomal protein bS20 family.

Functionally, binds directly to 16S ribosomal RNA. This chain is Small ribosomal subunit protein bS20, found in Marinobacter nauticus (strain ATCC 700491 / DSM 11845 / VT8) (Marinobacter aquaeolei).